Consider the following 308-residue polypeptide: Adult enhancer factor 1 (308 aa).

Disordered regions lie at residues 50–94 (AHMA…PLPF) and 123–143 (QAAAAEQQQPPPPTSHLTHLT). The segment covering 56–76 (QQQQQQQQQQQQQHHQQQQQQ) has biased composition (low complexity). The segment covering 81–90 (PSVPPPPTEL) has biased composition (pro residues). 4 consecutive C2H2-type zinc fingers follow at residues 184-206 (FHCTVCDRRFRQLSTLTNHVKIH), 212-234 (YKCNVCDKTFRQSSTLTNHLKIH), 240-262 (YNCNFCPKHFRQLSTLANHVKIH), and 268-290 (FECVICKKQFRQSSTLNNHIKIH).

In terms of tissue distribution, found in all tissues examined including the ovary and the fat body.

It localises to the nucleus. In terms of biological role, transcriptional repressor that binds specifically to fat body-specific enhancers, namely the adult ADH enhancer (AAE) and the enhancer that controls yolk protein gene expression. The sequence is that of Adult enhancer factor 1 (Aef1) from Drosophila melanogaster (Fruit fly).